A 203-amino-acid chain; its full sequence is Large ribosomal subunit protein bL25 (203 aa).

The protein belongs to the bacterial ribosomal protein bL25 family. CTC subfamily. In terms of assembly, part of the 50S ribosomal subunit; part of the 5S rRNA/L5/L18/L25 subcomplex. Contacts the 5S rRNA. Binds to the 5S rRNA independently of L5 and L18.

Its function is as follows. This is one of the proteins that binds to the 5S RNA in the ribosome where it forms part of the central protuberance. This Rickettsia rickettsii (strain Iowa) protein is Large ribosomal subunit protein bL25.